The sequence spans 717 residues: Ubiquitin carboxyl-terminal hydrolase 11 (717 aa).

The tract at residues 231 to 268 (ATAPPVHSLEVSSQIRDSSQDSSSSLSKVEKPKEEEGK) is disordered. Low complexity predominate over residues 242-257 (SSQIRDSSQDSSSSLS). Residues 258–268 (KVEKPKEEEGK) show a composition bias toward basic and acidic residues. One can recognise a USP domain in the interval 298–707 (TGLQNPCNTC…EVYVLFYERM (410 aa)). The Nucleophile role is filled by cysteine 307. Residues 531–577 (KKEEITSQKKKSTIFGFHSRSRSKSPHHHHHHHHSSDDSTKNAKKRN) form a disordered region. Basic residues predominate over residues 549-564 (SRSRSKSPHHHHHHHH). The active-site Proton acceptor is the histidine 649.

It belongs to the peptidase C19 family.

It carries out the reaction Thiol-dependent hydrolysis of ester, thioester, amide, peptide and isopeptide bonds formed by the C-terminal Gly of ubiquitin (a 76-residue protein attached to proteins as an intracellular targeting signal).. The protein is Ubiquitin carboxyl-terminal hydrolase 11 (UBP11) of Saccharomyces cerevisiae (strain ATCC 204508 / S288c) (Baker's yeast).